A 72-amino-acid chain; its full sequence is MAKEELLEFPGVVKELLPNATFRVELENGHEIIAHTAGKMRKNRIRVLAGDKVQVEMTPYDLTKGRINYRFK.

In terms of domain architecture, S1-like spans 1–72; sequence MAKEELLEFP…TKGRINYRFK (72 aa).

Belongs to the IF-1 family. In terms of assembly, component of the 30S ribosomal translation pre-initiation complex which assembles on the 30S ribosome in the order IF-2 and IF-3, IF-1 and N-formylmethionyl-tRNA(fMet); mRNA recruitment can occur at any time during PIC assembly.

It is found in the cytoplasm. One of the essential components for the initiation of protein synthesis. Stabilizes the binding of IF-2 and IF-3 on the 30S subunit to which N-formylmethionyl-tRNA(fMet) subsequently binds. Helps modulate mRNA selection, yielding the 30S pre-initiation complex (PIC). Upon addition of the 50S ribosomal subunit IF-1, IF-2 and IF-3 are released leaving the mature 70S translation initiation complex. The sequence is that of Translation initiation factor IF-1 from Dinoroseobacter shibae (strain DSM 16493 / NCIMB 14021 / DFL 12).